The primary structure comprises 160 residues: UPF0178 protein PSPA7_5991 (160 aa).

The protein belongs to the UPF0178 family.

This chain is UPF0178 protein PSPA7_5991, found in Pseudomonas paraeruginosa (strain DSM 24068 / PA7) (Pseudomonas aeruginosa (strain PA7)).